Reading from the N-terminus, the 130-residue chain is Cholecystokinin (130 aa).

Residues 1-20 (MYSGICICVFLAVLSASSFG) form the signal peptide. Positions 21-48 (QQTAGSHNGNPLAAELEQSLTEHHRHVR) are excised as a propeptide. The interval 40–59 (LTEHHRHVRAPSSAGPLKPV) is disordered. Sulfotyrosine is present on Tyr-112. The residue at position 118 (Phe-118) is a Phenylalanine amide. A propeptide spanning residues 122 to 130 (SAEEYEYSS) is cleaved from the precursor. 2 positions are modified to sulfotyrosine: Tyr-126 and Tyr-128.

This sequence belongs to the gastrin/cholecystokinin family. In terms of processing, the precursor is cleaved by proteases to produce a number of active cholecystokinins. In terms of tissue distribution, highly concentrated in the duodenum. Also localized in more distal parts of the small intestine.

It localises to the secreted. Functionally, this peptide hormone induces gall bladder contraction and the release of pancreatic enzymes in the gut. Its function in the brain is not clear. The protein is Cholecystokinin (CCK) of Struthio camelus (Common ostrich).